Reading from the N-terminus, the 155-residue chain is V-type proton ATPase 16 kDa proteolipid subunit c (155 aa).

Over methionine 1 to tyrosine 10 the chain is Lumenal. The chain crosses the membrane as a helical span at residues alanine 11–glycine 33. At threonine 34 to serine 55 the chain is on the cytoplasmic side. The helical transmembrane segment at isoleucine 56–isoleucine 76 threads the bilayer. Residues alanine 77 to glutamine 92 are Lumenal-facing. A helical transmembrane segment spans residues leucine 93 to glycine 114. The Cytoplasmic portion of the chain corresponds to aspartate 115–methionine 131. The helical transmembrane segment at isoleucine 132–leucine 152 threads the bilayer. Over serine 153–lysine 155 the chain is Lumenal.

The protein belongs to the V-ATPase proteolipid subunit family. In terms of assembly, V-ATPase is a heteromultimeric enzyme made up of two complexes: the ATP-hydrolytic V1 complex and the proton translocation V0 complex. The V1 complex consists of three catalytic AB heterodimers that form a heterohexamer, three peripheral stalks each consisting of EG heterodimers, one central rotor including subunits D and F, and the regulatory subunits C and H. The proton translocation complex V0 consists of the proton transport subunit a, a ring of proteolipid subunits c9c'', rotary subunit d, subunits e and f, and the accessory subunits ATP6AP1/Ac45 and ATP6AP2/PRR. Interacts with the V0 complex V-ATPase subunit a4 ATP6V0A4. Interacts with LASS2. Interacts with RNF182; this interaction leads to ubiquitination and degradation via the proteasome pathway. In terms of processing, ubiquitinated by RNF182, leading to its degradation via the ubiquitin-proteasome pathway. Expressed in brain (at protein level).

It localises to the cytoplasmic vesicle. The protein resides in the clathrin-coated vesicle membrane. It is found in the secretory vesicle. The protein localises to the synaptic vesicle membrane. Its function is as follows. Proton-conducting pore forming subunit of the V0 complex of vacuolar(H+)-ATPase (V-ATPase), a multisubunit enzyme composed of a peripheral complex (V1) that hydrolyzes ATP and a membrane integral complex (V0) that translocates protons. V-ATPase is responsible for acidifying and maintaining the pH of intracellular compartments and in some cell types, is targeted to the plasma membrane, where it is responsible for acidifying the extracellular environment. The sequence is that of V-type proton ATPase 16 kDa proteolipid subunit c (ATP6V0C) from Bos taurus (Bovine).